The following is a 456-amino-acid chain: Acetylcholine receptor subunit alpha (456 aa).

A signal peptide spans 1–20 (MNYFILILPILPYLYGPAVC). Topologically, residues 21–230 (SEDETRLVKT…ITYHFLLLRL (210 aa)) are extracellular. Intrachain disulfides connect Cys-148-Cys-162 and Cys-212-Cys-213. N-linked (GlcNAc...) asparagine glycosylation is present at Asn-161. The next 3 membrane-spanning stretches (helical) occupy residues 231 to 255 (PLYFIVNVIIPCMLFSFLTGLVFYL), 263 to 281 (MTLSISVLLSLTVFLLVIV), and 297 to 316 (YMLFTMIFVIASIIITVIVI). The Cytoplasmic portion of the chain corresponds to 317 to 428 (NTHHRSPSTH…WKFVAMVLDH (112 aa)). Residues 429–447 (ILLCVFMAVCIIGTLGVFA) form a helical membrane-spanning segment.

The protein belongs to the ligand-gated ion channel (TC 1.A.9) family. Acetylcholine receptor (TC 1.A.9.1) subfamily. Alpha-1/CHRNA1 sub-subfamily. In terms of assembly, one of the alpha chains that assemble within the acetylcholine receptor, a pentamer of two alpha chains, a beta, a delta, and a gamma or epsilon chains.

Its subcellular location is the postsynaptic cell membrane. The protein localises to the cell membrane. It catalyses the reaction K(+)(in) = K(+)(out). The catalysed reaction is Na(+)(in) = Na(+)(out). Functionally, upon acetylcholine binding, the AChR responds by an extensive change in conformation that affects all subunits and leads to opening of an ion-conducting channel across the plasma membrane. The polypeptide is Acetylcholine receptor subunit alpha (chrna1) (Danio rerio (Zebrafish)).